The sequence spans 216 residues: Probable transaldolase (216 aa).

Lys83 (schiff-base intermediate with substrate) is an active-site residue.

The protein belongs to the transaldolase family. Type 3B subfamily.

The protein localises to the cytoplasm. The catalysed reaction is D-sedoheptulose 7-phosphate + D-glyceraldehyde 3-phosphate = D-erythrose 4-phosphate + beta-D-fructose 6-phosphate. Its pathway is carbohydrate degradation; pentose phosphate pathway; D-glyceraldehyde 3-phosphate and beta-D-fructose 6-phosphate from D-ribose 5-phosphate and D-xylulose 5-phosphate (non-oxidative stage): step 2/3. Functionally, transaldolase is important for the balance of metabolites in the pentose-phosphate pathway. The sequence is that of Probable transaldolase from Shouchella clausii (strain KSM-K16) (Alkalihalobacillus clausii).